Reading from the N-terminus, the 157-residue chain is Trafficking protein particle complex subunit 6b (157 aa).

The protein belongs to the TRAPP small subunits family. BET3 subfamily. In terms of assembly, homodimer. Part of a TRAPP complex.

Its subcellular location is the golgi apparatus. The protein resides in the cis-Golgi network. The protein localises to the endoplasmic reticulum. Its function is as follows. Component of a transport protein particle (TRAPP) complex that may function in specific stages of inter-organelle traffic. Specifically involved in the early development of neural circuitry, likely by controlling the frequency and amplitude of intracellular calcium transients implicated in the regulation of neuron differentiation and survival. This chain is Trafficking protein particle complex subunit 6b, found in Danio rerio (Zebrafish).